The primary structure comprises 486 residues: Glutamate--tRNA ligase (486 aa).

Residues 11–21 (PSPTGVVHIGN) carry the 'HIGH' region motif. The 'KMSKS' region motif lies at 255–259 (KLSKR). An ATP-binding site is contributed by Lys-258.

The protein belongs to the class-I aminoacyl-tRNA synthetase family. Glutamate--tRNA ligase type 1 subfamily. Monomer.

It localises to the cytoplasm. It catalyses the reaction tRNA(Glu) + L-glutamate + ATP = L-glutamyl-tRNA(Glu) + AMP + diphosphate. Its function is as follows. Catalyzes the attachment of glutamate to tRNA(Glu) in a two-step reaction: glutamate is first activated by ATP to form Glu-AMP and then transferred to the acceptor end of tRNA(Glu). The protein is Glutamate--tRNA ligase of Streptococcus pneumoniae (strain CGSP14).